Consider the following 993-residue polypeptide: Signal peptide, CUB and EGF-like domain-containing protein 3 (993 aa).

Positions 1 to 20 are cleaved as a signal peptide; sequence MGSGRVPGLCLLVLLVHARA. Positions 29–69 constitute an EGF-like 1; calcium-binding domain; it reads DVDECVEGTDNCHIDAICQNTPRSYKCICKSGYTGDGKHCK. 26 disulfides stabilise this stretch: C33/C46, C40/C55, C57/C68, C74/C86, C82/C95, C97/C110, C116/C127, C123/C136, C161/C172, C168/C182, C184/C197, C201/C212, C208/C221, C223/C236, C240/C251, C247/C260, C262/C275, C281/C292, C288/C301, C303/C316, C322/C332, C328/C341, C343/C355, C361/C372, C368/C381, and C383/C397. The EGF-like 2; calcium-binding domain occupies 70 to 111; the sequence is DVDECEREDNAGCVHDCVNIPGNYRCTCYDGFHLAHDGHNCL. Residues 112-148 enclose the EGF-like 3; calcium-binding domain; sequence DVDECAEGNGGCQQSCVNMMGSYECHCREGFFLSDNQ. EGF-like domains follow at residues 157–198, 199–237, and 238–276; these read EGMN…RDCK, LTCNYGNGGCQHTCDDTEQGPRCGCHIKFVLHTDGKTCI, and ETCAVNNGGCDSKCHDAATGVHCTCPVGFMLQPDRKTCK. Residues 277 to 317 form the EGF-like 7; calcium-binding domain; that stretch reads DIDECRLNNGGCDHICRNTVGSFECSCKKGYKLLINERNCQ. Residues 318-356 enclose the EGF-like 8; calcium-binding domain; sequence DIDECSFDRTCDHICVNTPGSFQCLCHRGYLLYGITHCG. The EGF-like 9; calcium-binding domain maps to 357–398; the sequence is DVDECSINRGGCRFGCINTPGSYQCTCPAGQGRLHWNGKDCT. Residues N417, N464, N685, N756, and N785 are each glycosylated (N-linked (GlcNAc...) asparagine). Cystine bridges form between C804/C830 and C857/C878. Positions 804 to 916 constitute a CUB domain; sequence CGGELGEFTG…RGFQIPYVTY (113 aa).

Forms homooligomers. Forms heterooligomers with SCUBE1 and SCUBE2. Interacts with TGFBR2 through the CUB domain; this interaction does not affect TGFB1-binding to TGFBR2. Interacts with BMP2, BMP4 and BMP7; the interaction is mediated by the CUB domain. Interacts with BMPR1A, BMPR1B and BMPR2; the interaction with BMPR1A and BMPR1B is BMP2- and BMP4-dependent. In terms of processing, N-glycosylated. Proteolytic cleavage produces a CUB-containing C-terminal fragment that retains the ability to bind to TGFBR2. This reaction is catalyzed in vitro by MMP2 and, to a lesser extent, by MMP9. Highly expressed in osteoblasts. In normal lung, mainly expressed in bronchial epithelial cells. Tends to be up-regulated in lung cancer cells.

Its subcellular location is the secreted. The protein resides in the cell surface. Functionally, is a positive regulator of the BMP signaling pathway, required for proper chondrogenesis, osteogenesis and skeletal development. It acts as a coreceptor for BMP ligands, particularly BMP2 and BMP4, facilitating their interactions with BMP type I receptors. It is required for ligand-induced recruitment of BMP receptors to lipid rafts. Binds to TGFBR2 and activates TGFB signaling. In lung cancer cells, could serve as an endogenous autocrine and paracrine ligand of TGFBR2, which could regulate TGFBR2 signaling and hence modulate epithelial-mesenchymal transition and cancer progression. This Homo sapiens (Human) protein is Signal peptide, CUB and EGF-like domain-containing protein 3.